The sequence spans 709 residues: Molybdenum cofactor sulfurase (709 aa).

An N6-(pyridoxal phosphate)lysine modification is found at K208. Residue C367 is part of the active site. In terms of domain architecture, MOSC spans 563-707 (DNALDRQNCR…LESGMSVNFS (145 aa)).

It belongs to the class-V pyridoxal-phosphate-dependent aminotransferase family. MOCOS subfamily. It depends on pyridoxal 5'-phosphate as a cofactor.

It catalyses the reaction Mo-molybdopterin + L-cysteine + AH2 = thio-Mo-molybdopterin + L-alanine + A + H2O. Its pathway is cofactor biosynthesis; molybdopterin biosynthesis. Functionally, sulfurates the molybdenum cofactor. Sulfation of molybdenum is essential for xanthine dehydrogenase (XDH) and aldehyde oxidase (ADO) enzymes in which molybdenum cofactor is liganded by 1 oxygen and 1 sulfur atom in active form. The protein is Molybdenum cofactor sulfurase of Caenorhabditis elegans.